The following is a 130-amino-acid chain: Small ribosomal subunit protein uS9 (130 aa).

Belongs to the universal ribosomal protein uS9 family.

In Xanthomonas oryzae pv. oryzae (strain MAFF 311018), this protein is Small ribosomal subunit protein uS9.